A 313-amino-acid chain; its full sequence is ADP-L-glycero-D-manno-heptose-6-epimerase (313 aa).

NADP(+) contacts are provided by residues 10 to 11 (MI), 31 to 32 (DN), Lys-38, Lys-53, 75 to 79 (EGACS), and Asn-92. Residue Tyr-139 is the Proton acceptor of the active site. Residue Lys-143 participates in NADP(+) binding. Asn-174 contributes to the substrate binding site. Val-175 and Lys-183 together coordinate NADP(+). The active-site Proton acceptor is Lys-183. Substrate contacts are provided by residues Ser-185, His-192, 206 to 209 (FEGS), Arg-214, and Tyr-277.

This sequence belongs to the NAD(P)-dependent epimerase/dehydratase family. HldD subfamily. Homopentamer. Requires NADP(+) as cofactor.

The enzyme catalyses ADP-D-glycero-beta-D-manno-heptose = ADP-L-glycero-beta-D-manno-heptose. It participates in nucleotide-sugar biosynthesis; ADP-L-glycero-beta-D-manno-heptose biosynthesis; ADP-L-glycero-beta-D-manno-heptose from D-glycero-beta-D-manno-heptose 7-phosphate: step 4/4. Its function is as follows. Catalyzes the interconversion between ADP-D-glycero-beta-D-manno-heptose and ADP-L-glycero-beta-D-manno-heptose via an epimerization at carbon 6 of the heptose. This is ADP-L-glycero-D-manno-heptose-6-epimerase from Aliivibrio fischeri (strain MJ11) (Vibrio fischeri).